We begin with the raw amino-acid sequence, 494 residues long: Gabija protein GajB (494 aa).

Positions 1–229 (MSREQIIKDG…YHLTSNFRCC (229 aa)) constitute a UvrD-like helicase ATP-binding domain. An ATP-binding site is contributed by 17 to 24 (AGAGSGKT).

The protein belongs to the helicase family. As to quaternary structure, homodimer. Interacts with GajA; 2 GajB dimers dock at opposite sides of the GajA complex to form a 4:4 GajA-GajB assembly (GajAB). GajAB interacts with Bacillus phage Phi3T Gad1 protein; this interaction forms a 4:4:8 GajAB-Gad1 complex and leads to GajAB inhibition.

In terms of biological role, component of antiviral defense system Gabija type I, composed of GajA and GajB. Expression of Gabija type I in B.subtilis (strain BEST7003) confers resistance to phages phi105, phi29, rho14, SpBeta and SBSphiC. Expression of Gabija type I in E.coli B (strain ATCC 11303) confers resistance to phage T7. May be a helicase or contribute to GajA activation. The polypeptide is Gabija protein GajB (Bacillus cereus (strain VD045)).